The chain runs to 467 residues: Gamma-aminobutyric acid receptor subunit rho-3 (467 aa).

The signal sequence occupies residues 1–24 (MVLAFQLVSFTYIWIILKPNVCAA). Residues 25–266 (SNIKMTHQRC…LFINFVLRRH (242 aa)) lie on the Extracellular side of the membrane. Residues Arg-111 and Ser-175 each contribute to the 4-aminobutanoate site. A disulfide bond links Cys-184 and Cys-198. Glu-203 serves as a coordination point for 4-aminobutanoate. A glycan (N-linked (GlcNAc...) asparagine) is linked at Asn-220. The chain crosses the membrane as a helical span at residues 267–287 (VFFFVLQTYFPAILMVMLSWV). Topologically, residues 288–299 (SFWIDRRAVPAR) are cytoplasmic. A helical membrane pass occupies residues 300–320 (VSLGITTVLTMSTIITAVSAS). Residues 321–331 (MPQVSYLKAVD) are Extracellular-facing. Residues 332–352 (VYLWVSSLFVFLSVIEYAAVN) traverse the membrane as a helical segment. Residues 347 to 448 (EYAAVNYLTT…NNHVIDTYSR (102 aa)) are interaction with SQSTM1. The Cytoplasmic portion of the chain corresponds to 353-446 (YLTTVEERKQ…LENNHVIDTY (94 aa)). Residues 447–467 (SRILFPIVYILFNLFYWGVYV) traverse the membrane as a helical segment.

This sequence belongs to the ligand-gated ion channel (TC 1.A.9) family. Gamma-aminobutyric acid receptor (TC 1.A.9.5) subfamily. GABRR3 sub-subfamily. In terms of assembly, three rho subunits (rho-1/GBRR1, rho-2/GBRR2 and rho-3/GBRR3) coassemble either to form functional homopentamers or heteropentamers. Forms a ternary complex with SQSTM1 and PRKCZ.

It is found in the postsynaptic cell membrane. The protein resides in the cell membrane. It catalyses the reaction chloride(in) = chloride(out). With respect to regulation, inhibited by TPMPA, a rho-specific antagonist, when forming a homopentamer. Functionally, rho subunit of the pentameric ligand-gated chloride channels responsible for mediating the effects of gamma-aminobutyric acid (GABA), the major inhibitory neurotransmitter in the brain. Rho-containing GABA-gated chloride channels are a subclass of GABA(A) receptors (GABAARs) entirely composed of rho subunits, where GABA molecules bind at the rho intersubunit interfaces. When activated by GABA, rho-GABAARs selectively allow the flow of chloride anions across the cell membrane down their electrochemical gradient. The protein is Gamma-aminobutyric acid receptor subunit rho-3 of Homo sapiens (Human).